A 121-amino-acid polypeptide reads, in one-letter code: Small ribosomal subunit protein uS12c (121 aa).

This sequence belongs to the universal ribosomal protein uS12 family. As to quaternary structure, part of the 30S ribosomal subunit.

It is found in the plastid. Its subcellular location is the apicoplast. With S4 and S5 plays an important role in translational accuracy. Located at the interface of the 30S and 50S subunits. This chain is Small ribosomal subunit protein uS12c (rps12), found in Toxoplasma gondii.